Reading from the N-terminus, the 227-residue chain is DNA repair protein RecO (227 aa).

Belongs to the RecO family.

Involved in DNA repair and RecF pathway recombination. The sequence is that of DNA repair protein RecO from Pseudomonas savastanoi pv. phaseolicola (strain 1448A / Race 6) (Pseudomonas syringae pv. phaseolicola (strain 1448A / Race 6)).